Consider the following 150-residue polypeptide: UPF0179 protein Mbur_1033 (150 aa).

The protein belongs to the UPF0179 family.

This chain is UPF0179 protein Mbur_1033, found in Methanococcoides burtonii (strain DSM 6242 / NBRC 107633 / OCM 468 / ACE-M).